A 342-amino-acid chain; its full sequence is Anthranilate phosphoribosyltransferase (342 aa).

5-phospho-alpha-D-ribose 1-diphosphate contacts are provided by residues glycine 83, 86–87 (GD), threonine 91, 93–96 (NIST), 111–119 (KHGGRSVSS), and alanine 123. Glycine 83 lines the anthranilate pocket. Serine 95 contributes to the Mg(2+) binding site. Arginine 169 contributes to the anthranilate binding site. Mg(2+) contacts are provided by aspartate 228 and glutamate 229.

The protein belongs to the anthranilate phosphoribosyltransferase family. As to quaternary structure, homodimer. The cofactor is Mg(2+).

It carries out the reaction N-(5-phospho-beta-D-ribosyl)anthranilate + diphosphate = 5-phospho-alpha-D-ribose 1-diphosphate + anthranilate. It functions in the pathway amino-acid biosynthesis; L-tryptophan biosynthesis; L-tryptophan from chorismate: step 2/5. Catalyzes the transfer of the phosphoribosyl group of 5-phosphorylribose-1-pyrophosphate (PRPP) to anthranilate to yield N-(5'-phosphoribosyl)-anthranilate (PRA). The protein is Anthranilate phosphoribosyltransferase of Neisseria gonorrhoeae (strain ATCC 700825 / FA 1090).